A 559-amino-acid chain; its full sequence is MAASEDGSGCLVSRGRSQSDPSVLTDSSATSSADAGENPDEMDQTPPARPEYLVSGIRTPPVRRNSKLATLGRIFKPWKWRKKKNEKLKQTTSALEKKMAGRQGREELIKKGLLEMMEQDAESKTCNPDGGPRSVQSEPPTPKSETLTSEDAQPGSPLATGTDQVSLDKPLSSAAHLDDAAKMPSASSGEEADAGSLLPTTNELSQALAGADSLDSPPRPLERSVGQLPSPPLLPTPPPKASSKTTKNVTGQATLFQASSMKSADPSLRGQLSTPTGSPHLTTVHRPLPPSRVIEELHRALATKHRQDSFQGRESKGSPKKRLDVRLSRTSSVERGKEREEAWSFDGALENKRTAAKESEENKENLIINSELKDDLLLYQDEEALNDSIISGTLPRKCKKELLAVKLRNRPSKQELEDRNIFPRRTDEERQEIRQQIEMKLSKRLSQRPAVEELERRNILKQRNDQTEQEERREIKQRLTRKLNQRPTVDELRDRKILIRFSDYVEVAKAQDYDRRADKPWTRLSAADKAAIRKELNEYKSNEMEVHASSKHLTRFHRP.

Positions 1–65 (MAASEDGSGC…GIRTPPVRRN (65 aa)) are disordered. The segment covering 15–24 (GRSQSDPSVL) has biased composition (polar residues). Over residues 25-35 (TDSSATSSADA) the composition is skewed to low complexity. The residue at position 70 (T70) is a Phosphothreonine. The interval 82-342 (KKKNEKLKQT…VERGKEREEA (261 aa)) is disordered. The stretch at 93–118 (SALEKKMAGRQGREELIKKGLLEMME) is one RPEL 1 repeat. Over residues 95-113 (LEKKMAGRQGREELIKKGL) the composition is skewed to basic and acidic residues. Over residues 134–151 (SVQSEPPTPKSETLTSED) the composition is skewed to polar residues. Positions 229-240 (PSPPLLPTPPPK) are enriched in pro residues. Phosphoserine is present on S230. T236 carries the post-translational modification Phosphothreonine. 2 stretches are compositionally biased toward polar residues: residues 248–262 (NVTG…SSMK) and 270–281 (GQLSTPTGSPHL). A compositionally biased stretch (basic and acidic residues) spans 293–342 (VIEELHRALATKHRQDSFQGRESKGSPKKRLDVRLSRTSSVERGKEREEA). A coiled-coil region spans residues 346 to 369 (DGALENKRTAAKESEENKENLIIN). RPEL repeat units lie at residues 401–426 (ELLA…PRRT), 439–464 (MKLS…KQRN), and 477–502 (QRLT…IRFS). The tract at residues 438-518 (EMKLSKRLSQ…KAQDYDRRAD (81 aa)) is required for PP1CA binding and inhibition of PP1 activity. Positions 450-486 (AVEELERRNILKQRNDQTEQEERREIKQRLTRKLNQR) form a coiled coil.

The protein belongs to the phosphatase and actin regulator family. As to quaternary structure, binds actin and PPP1CA; thus inhibiting the protein phosphatase 1 (PP1) activity. In terms of tissue distribution, abundantly expressed in brain. Also found in several tumors such as lung carcinomas, nervous tumors and HL-60 leukemia cells. Isoform 3 is the major form in U-937, GOTO and HL-60 leukemia cells.

The protein localises to the nucleus matrix. The protein is Phosphatase and actin regulator 3 (PHACTR3) of Homo sapiens (Human).